Consider the following 463-residue polypeptide: Retinoic acid receptor RXR-gamma (463 aa).

The interval 1-138 (MYGNYSHFMK…TSPGSLVKHI (138 aa)) is modulating. Residues 17–53 (GSPGHSGSTSMSPSAALSTGKPMDSHPSYTDTPVSAP) form a disordered region. Residues 21–33 (HSGSTSMSPSAAL) show a composition bias toward polar residues. 2 NR C4-type zinc fingers span residues 139-159 (CAICGDRSSGKHYGVYSCEGC) and 175-199 (CRDNKDCLIDKRQRNRCQYCRYQKC). The nuclear receptor DNA-binding region spans 139–204 (CAICGDRSSG…RYQKCLVMGM (66 aa)). The segment at 205-230 (KREAVQEERQRSRERAESEAECASSG) is hinge. Basic and acidic residues predominate over residues 211–222 (EERQRSRERAES). Residues 211–232 (EERQRSRERAESEAECASSGHE) are disordered. Positions 231-459 (HEDMPVERIL…TFLMEMLETP (229 aa)) constitute an NR LBD domain.

Belongs to the nuclear hormone receptor family. NR2 subfamily. As to quaternary structure, homodimer. Heterodimer with a RAR molecule. Binds DNA preferentially as a RAR/RXR heterodimer. Interacts with RARA. In terms of processing, acetylated by EP300.

The protein localises to the nucleus. It localises to the cytoplasm. Functionally, receptor for retinoic acid. Retinoic acid receptors bind as heterodimers to their target response elements in response to their ligands, all-trans or 9-cis retinoic acid, and regulate gene expression in various biological processes. The RAR/RXR heterodimers bind to the retinoic acid response elements (RARE) composed of tandem 5'-AGGTCA-3' sites known as DR1-DR5. The high affinity ligand for RXRs is 9-cis retinoic acid. The polypeptide is Retinoic acid receptor RXR-gamma (RXRG) (Sus scrofa (Pig)).